Consider the following 474-residue polypeptide: Cyclin-dependent kinase 2 homolog (474 aa).

Positions 7-446 constitute a Protein kinase domain; it reads YRHVVKLGEG…AAEAVHHPYL (440 aa). ATP-binding positions include 13-21 and K36; that span reads LGEGTYGMV. A Phosphothreonine modification is found at T17. Y18 is modified (phosphotyrosine). D131 (proton acceptor) is an active-site residue. The interval 150-200 is disordered; the sequence is TALPSSPQQSMRVPHAGGTNGEAGRASANGNEHAPRPTAAEGSVSPWEEAA. Phosphoserine is present on S230. Positions 334–354 are enriched in low complexity; the sequence is QQLQAQQQQPQQGSSPSHSSS. Residues 334 to 356 form a disordered region; the sequence is QQLQAQQQQPQQGSSPSHSSSRA.

Belongs to the protein kinase superfamily. CMGC Ser/Thr protein kinase family. CDC2/CDKX subfamily. May form a complex composed of at least the catalytic subunit CRK2 and a cyclin. The cofactor is Mg(2+).

The protein resides in the cytoplasm. It carries out the reaction L-seryl-[protein] + ATP = O-phospho-L-seryl-[protein] + ADP + H(+). It catalyses the reaction L-threonyl-[protein] + ATP = O-phospho-L-threonyl-[protein] + ADP + H(+). The catalysed reaction is [DNA-directed RNA polymerase] + ATP = phospho-[DNA-directed RNA polymerase] + ADP + H(+). Its activity is regulated as follows. Phosphorylation at Thr-17 or Tyr-18 inactivates the enzyme, while phosphorylation at Ser-230 activates it. Serine/threonine-protein kinase. Involved in the control of the cell cycle. Required for entry into S-phase and mitosis. Probable component of the kinase complex that phosphorylates the repetitive C-terminus of RNA polymerase II. The protein is Cyclin-dependent kinase 2 homolog of Crithidia fasciculata.